The chain runs to 428 residues: UPF0761 membrane protein TERTU_3006 (428 aa).

7 helical membrane-spanning segments follow: residues 47–67, 104–124, 143–163, 189–209, 218–238, 248–268, and 292–312; these read LFALVPLMTVTYTMFSAIPAF, LSGVGVVMLLVTAYLMLRNIE, YLLYWAILSVGPILVAAAFLL, VVPWALTSAAFTLLFVAVPNC, IGGVITAFAFEVVKAVFGYIV, GAFAVVPLFLLWVNLLWTIIL, and MIVVLICLALFREKAALGESV.

Belongs to the UPF0761 family.

The protein resides in the cell inner membrane. The protein is UPF0761 membrane protein TERTU_3006 of Teredinibacter turnerae (strain ATCC 39867 / T7901).